A 310-amino-acid polypeptide reads, in one-letter code: S-methyl-5'-thioadenosine phosphorylase (310 aa).

Residues threonine 20, 62–63 (RH), and 95–96 (SA) each bind phosphate. Substrate is bound at residue methionine 197. A phosphate-binding site is contributed by serine 198. 221–223 (DYD) contacts substrate.

This sequence belongs to the PNP/MTAP phosphorylase family. MTAP subfamily. As to quaternary structure, homotrimer.

The protein resides in the cytoplasm. The protein localises to the nucleus. It carries out the reaction S-methyl-5'-thioadenosine + phosphate = 5-(methylsulfanyl)-alpha-D-ribose 1-phosphate + adenine. It participates in amino-acid biosynthesis; L-methionine biosynthesis via salvage pathway; S-methyl-5-thio-alpha-D-ribose 1-phosphate from S-methyl-5'-thioadenosine (phosphorylase route): step 1/1. Catalyzes the reversible phosphorylation of S-methyl-5'-thioadenosine (MTA) to adenine and 5-methylthioribose-1-phosphate. Involved in the breakdown of MTA, a major by-product of polyamine biosynthesis. Responsible for the first step in the methionine salvage pathway after MTA has been generated from S-adenosylmethionine. Has broad substrate specificity with 6-aminopurine nucleosides as preferred substrates. This is S-methyl-5'-thioadenosine phosphorylase from Neurospora crassa (strain ATCC 24698 / 74-OR23-1A / CBS 708.71 / DSM 1257 / FGSC 987).